We begin with the raw amino-acid sequence, 109 residues long: MMRGGMGNMNNMMKQMQKMQKEMAKAQEELGEKTVEGTAGGGMITVIANGHKQILEVKVKEEVVDPEDIEMLQDLVLAATNDALKKADELSNSTMGKFTKGLNLPGGMF.

This sequence belongs to the YbaB/EbfC family. Homodimer.

The protein resides in the cytoplasm. It is found in the nucleoid. Binds to DNA and alters its conformation. May be involved in regulation of gene expression, nucleoid organization and DNA protection. This Bacillus cereus (strain ATCC 10987 / NRS 248) protein is Nucleoid-associated protein BCE_0021.